A 391-amino-acid polypeptide reads, in one-letter code: Phosphatidate cytidylyltransferase 4, chloroplastic (391 aa).

Residues 1–61 (MATFAELVLS…SVSRRFLTAV (61 aa)) constitute a chloroplast transit peptide. The next 6 helical transmembrane spans lie at 102–122 (IFGI…GWVF), 175–195 (FGNI…ALLV), 202–222 (FAQL…PSFW), 254–274 (VGLV…TFAF), 298–318 (IVGL…LSWP), and 321–341 (LFSS…GDLT).

It belongs to the CDS family. It depends on Mg(2+) as a cofactor.

The protein localises to the plastid. It localises to the chloroplast membrane. The catalysed reaction is a 1,2-diacyl-sn-glycero-3-phosphate + CTP + H(+) = a CDP-1,2-diacyl-sn-glycerol + diphosphate. Its pathway is phospholipid metabolism; CDP-diacylglycerol biosynthesis; CDP-diacylglycerol from sn-glycerol 3-phosphate: step 3/3. Highest activities is obtained at about 30 mM CTP and 2 mM phosphatidic acid (PA). May be involved in the synthesis of minor phospholipids and in modulation of IP3-mediated signal transduction. Promotes the biosynthesis of plastidial phosphatidylglycerol (PG) which is required for structure and function of thylakoid membranes and, hence, for photoautotrophic growth. The protein is Phosphatidate cytidylyltransferase 4, chloroplastic of Arabidopsis thaliana (Mouse-ear cress).